Consider the following 436-residue polypeptide: 3-ketoacyl-CoA thiolase (436 aa).

Cysteine 99 acts as the Acyl-thioester intermediate in catalysis. Residues histidine 392 and cysteine 422 each act as proton acceptor in the active site.

The protein belongs to the thiolase-like superfamily. Thiolase family. In terms of assembly, heterotetramer of two alpha chains (FadJ) and two beta chains (FadI).

It is found in the cytoplasm. It catalyses the reaction an acyl-CoA + acetyl-CoA = a 3-oxoacyl-CoA + CoA. Its pathway is lipid metabolism; fatty acid beta-oxidation. Catalyzes the final step of fatty acid oxidation in which acetyl-CoA is released and the CoA ester of a fatty acid two carbons shorter is formed. In Salmonella dublin (strain CT_02021853), this protein is 3-ketoacyl-CoA thiolase.